The sequence spans 749 residues: Myosin-binding protein 2 (749 aa).

The chain crosses the membrane as a helical span at residues 17–37; the sequence is ITLILVYAFLEWSLIFFILLN. Positions 164–184 are disordered; it reads NLNDSQEETEEKKVPQSHEKL. A compositionally biased stretch (basic and acidic residues) spans 173 to 184; that stretch reads EEKKVPQSHEKL. The 99-residue stretch at 411–509 folds into the GTD-binding domain; that stretch reads LTVDKLKFEL…ELEKELEVYR (99 aa). Residues 589 to 621 adopt a coiled-coil conformation; it reads ERLSILGRLKFLEEKLTDLNNEEDDEEEAKTFE. Residues 608 to 640 form a disordered region; sequence NNEEDDEEEAKTFESNGSINGNEHIHGKETNGK. The segment covering 630–639 has biased composition (basic and acidic residues); sequence EHIHGKETNG. The stretch at 676–710 forms a coiled coil; sequence DSEKGENVTIEEEVDELYERLEALEADREFLRHCV.

Interacts with myosin XI-K and XI-1. Expressed in leaf epidermal cells, roots and root hairs.

It localises to the endomembrane system. Functionally, membrane-anchored myosin receptors that define a distinct, plant-specific transport vesicle compartment. This is Myosin-binding protein 2 from Arabidopsis thaliana (Mouse-ear cress).